The following is a 92-amino-acid chain: Small ribosomal subunit protein uS19c (92 aa).

Belongs to the universal ribosomal protein uS19 family.

It localises to the plastid. In terms of biological role, protein S19 forms a complex with S13 that binds strongly to the 16S ribosomal RNA. In Cuscuta reflexa (Southern Asian dodder), this protein is Small ribosomal subunit protein uS19c.